Reading from the N-terminus, the 139-residue chain is Gonadotropin subunit beta-2 (139 aa).

Residues M1–A24 form the signal peptide. Cystine bridges form between C30–C78, C44–C93, C47–C131, C55–C109, C59–C111, and C114–C121. N34 carries N-linked (GlcNAc...) asparagine glycosylation.

It belongs to the glycoprotein hormones subunit beta family. As to quaternary structure, heterodimer of an alpha and a beta chain.

It localises to the secreted. Its function is as follows. Involved in gametogenesis and steroidogenesis. The polypeptide is Gonadotropin subunit beta-2 (cgbb) (Morone saxatilis (Striped bass)).